A 270-amino-acid polypeptide reads, in one-letter code: S-methyl-5'-thioadenosine phosphorylase (270 aa).

Residues Ser-16, 58-59, and 91-92 contribute to the phosphate site; these read RH and SA. 3 disulfide bridges follow: Cys-138–Cys-205, Cys-200–Cys-262, and Cys-259–Cys-261. Met-190 provides a ligand contact to substrate. Thr-191 is a phosphate binding site. Residue 214–216 participates in substrate binding; it reads DYD.

The protein belongs to the PNP/MTAP phosphorylase family. MTAP subfamily. In terms of assembly, homohexamer. Dimer of a homotrimer.

It catalyses the reaction S-methyl-5'-thioadenosine + phosphate = 5-(methylsulfanyl)-alpha-D-ribose 1-phosphate + adenine. The protein operates within amino-acid biosynthesis; L-methionine biosynthesis via salvage pathway; S-methyl-5-thio-alpha-D-ribose 1-phosphate from S-methyl-5'-thioadenosine (phosphorylase route): step 1/1. Its function is as follows. Catalyzes the reversible phosphorylation of S-methyl-5'-thioadenosine (MTA) to adenine and 5-methylthioribose-1-phosphate. Involved in the breakdown of MTA, a major by-product of polyamine biosynthesis. Responsible for the first step in the methionine salvage pathway after MTA has been generated from S-adenosylmethionine. Has broad substrate specificity with 6-aminopurine nucleosides as preferred substrates. The polypeptide is S-methyl-5'-thioadenosine phosphorylase (Saccharolobus solfataricus (strain ATCC 35092 / DSM 1617 / JCM 11322 / P2) (Sulfolobus solfataricus)).